Here is a 530-residue protein sequence, read N- to C-terminus: Copine-B (530 aa).

2 C2 domains span residues 1 to 125 and 130 to 253; these read MTTP…SEIK and ETGV…PLIN. Positions 25, 31, 85, 87, and 100 each coordinate Ca(2+). The region spanning 294–513 is the VWFA domain; sequence NLMVAIDCTA…ETLREIPQQL (220 aa).

It belongs to the copine family. Requires Ca(2+) as cofactor.

This chain is Copine-B (cpnB-1), found in Dictyostelium discoideum (Social amoeba).